The primary structure comprises 95 residues: Large ribosomal subunit protein uL23cz/uL23cy (95 aa).

It belongs to the universal ribosomal protein uL23 family. As to quaternary structure, part of the 50S ribosomal subunit.

The protein resides in the plastid. It localises to the chloroplast. Its function is as follows. Binds to 23S rRNA. This is Large ribosomal subunit protein uL23cz/uL23cy (rpl23-A) from Amborella trichopoda.